We begin with the raw amino-acid sequence, 155 residues long: Pathogenesis-related protein STH-2 (155 aa).

This sequence belongs to the BetVI family.

This chain is Pathogenesis-related protein STH-2 (STH-2), found in Solanum tuberosum (Potato).